Consider the following 215-residue polypeptide: Adenylate kinase (215 aa).

10–15 provides a ligand contact to ATP; the sequence is GSGKGT. The tract at residues 30–59 is NMP; sequence STGDILREHVRNGTELGKEAKKYMDAGQLV. AMP contacts are provided by residues threonine 31, arginine 36, 57–59, 85–88, and glutamine 92; these read QLV and GYPR. Residues 126-162 are LID; the sequence is GRRMCKCGRSYHIIFNPPKVPGKCDECGGELYHRDDD. Arginine 127 serves as a coordination point for ATP. Zn(2+) is bound by residues cysteine 130 and cysteine 132. 135–136 serves as a coordination point for ATP; that stretch reads SY. Zn(2+) is bound by residues cysteine 149 and cysteine 152. Residues arginine 159 and arginine 170 each contribute to the AMP site. Position 198 (glycine 198) interacts with ATP.

This sequence belongs to the adenylate kinase family. Monomer.

The protein resides in the cytoplasm. It carries out the reaction AMP + ATP = 2 ADP. It functions in the pathway purine metabolism; AMP biosynthesis via salvage pathway; AMP from ADP: step 1/1. Functionally, catalyzes the reversible transfer of the terminal phosphate group between ATP and AMP. Plays an important role in cellular energy homeostasis and in adenine nucleotide metabolism. This Methanothrix thermoacetophila (strain DSM 6194 / JCM 14653 / NBRC 101360 / PT) (Methanosaeta thermophila) protein is Adenylate kinase.